Consider the following 196-residue polypeptide: MSREALIERQTTETNIRLKVALDGSGTWQGSSGIPFFDHLLAQMARHGLLDLKVWAEGDLEVDNHHTVEDIGICLGQAVKKALGDKKGISRYGSALVPMDEALVLVALDFSGRPYLAWGLELPPGRIGSLETELVEEFLRAMVNNSGLTLHVRQLAGHNAHHLAEALFKALGRAIRQAVTLDPREQGIPSTKGILS.

This sequence belongs to the imidazoleglycerol-phosphate dehydratase family.

Its subcellular location is the cytoplasm. It carries out the reaction D-erythro-1-(imidazol-4-yl)glycerol 3-phosphate = 3-(imidazol-4-yl)-2-oxopropyl phosphate + H2O. Its pathway is amino-acid biosynthesis; L-histidine biosynthesis; L-histidine from 5-phospho-alpha-D-ribose 1-diphosphate: step 6/9. In Moorella thermoacetica (strain ATCC 39073 / JCM 9320), this protein is Imidazoleglycerol-phosphate dehydratase.